A 136-amino-acid chain; its full sequence is Large ribosomal subunit protein uL16 (136 aa).

The protein belongs to the universal ribosomal protein uL16 family. Part of the 50S ribosomal subunit.

Binds 23S rRNA and is also seen to make contacts with the A and possibly P site tRNAs. In Buchnera aphidicola subsp. Cinara cedri (strain Cc), this protein is Large ribosomal subunit protein uL16.